We begin with the raw amino-acid sequence, 418 residues long: UDP-N-acetylglucosamine 1-carboxyvinyltransferase (418 aa).

22–23 (KN) is a phosphoenolpyruvate binding site. R92 contributes to the UDP-N-acetyl-alpha-D-glucosamine binding site. C116 serves as the catalytic Proton donor. The residue at position 116 (C116) is a 2-(S-cysteinyl)pyruvic acid O-phosphothioketal. UDP-N-acetyl-alpha-D-glucosamine-binding positions include 121–125 (RPIDL), D305, and L327.

Belongs to the EPSP synthase family. MurA subfamily.

The protein resides in the cytoplasm. It catalyses the reaction phosphoenolpyruvate + UDP-N-acetyl-alpha-D-glucosamine = UDP-N-acetyl-3-O-(1-carboxyvinyl)-alpha-D-glucosamine + phosphate. It participates in cell wall biogenesis; peptidoglycan biosynthesis. Its function is as follows. Cell wall formation. Adds enolpyruvyl to UDP-N-acetylglucosamine. The protein is UDP-N-acetylglucosamine 1-carboxyvinyltransferase of Campylobacter jejuni subsp. doylei (strain ATCC BAA-1458 / RM4099 / 269.97).